We begin with the raw amino-acid sequence, 126 residues long: Small ribosomal subunit protein uS13 (126 aa).

Residues 99–126 are disordered; sequence LRGQSTKNNARTRKGKRKTVANKKRVTK. A compositionally biased stretch (basic residues) spans 108 to 126; that stretch reads ARTRKGKRKTVANKKRVTK.

Belongs to the universal ribosomal protein uS13 family. As to quaternary structure, part of the 30S ribosomal subunit. Forms a loose heterodimer with protein S19. Forms two bridges to the 50S subunit in the 70S ribosome.

Located at the top of the head of the 30S subunit, it contacts several helices of the 16S rRNA. In the 70S ribosome it contacts the 23S rRNA (bridge B1a) and protein L5 of the 50S subunit (bridge B1b), connecting the 2 subunits; these bridges are implicated in subunit movement. Contacts the tRNAs in the A and P-sites. The sequence is that of Small ribosomal subunit protein uS13 from Azobacteroides pseudotrichonymphae genomovar. CFP2.